Consider the following 86-residue polypeptide: Kappa-theraphotoxin-Cg1a 2 (86 aa).

A signal peptide spans 1-21 (MKVSVVITLAVLGVMFVWASA). A propeptide spanning residues 22–50 (AELEERGSDQRDSPAWLKSMERIFQSEER) is cleaved from the precursor. 3 disulfides stabilise this stretch: C52-C66, C59-C71, and C65-C78. F84 carries the phenylalanine amide modification.

It belongs to the neurotoxin 10 (Hwtx-1) family. 28 (Jztx-11) subfamily. Expressed by the venom gland.

The protein localises to the secreted. In terms of biological role, this toxin acts as a voltage-dependent gating-modifier. It inhibits the sodium conductance (IC(50)=124 nM) and slows the fast inactivation (EC(50)=1180 nM) of Nav1.5/SCN5A. It significantly shifts the activation to more depolarized voltages and decreases the deactivation of Nav1.5 currents upon extreme depolarization, but only slightly affects voltage-dependence of steady-state inactivation. In addition, this toxin causes an approximately five-fold decrease in the rate of recovery from inactivation and an approximately 1.9-fold reduction in the closed-state inactivation rate. This toxin integrates the functions of site 3 toxins (alpha-scorpion toxins) with site 4 toxins (beta-scorpion and spider toxins) by targeting multiple sites on Nav1.5. Also shows inhibition of voltage-gated potassium channels (5 uM completely inhibits Kv2.1/KCNB1, whereas 5 uM moderately inhibits Kv4.2/KCND2 Kv4.1/KCND1 channels). The protein is Kappa-theraphotoxin-Cg1a 2 of Chilobrachys guangxiensis (Chinese earth tiger tarantula).